The primary structure comprises 81 residues: Costars family protein ABRACL (81 aa).

This sequence belongs to the costars family.

The chain is Costars family protein ABRACL from Salmo salar (Atlantic salmon).